The following is a 1393-amino-acid chain: MFGEGSRDNVALSKEGLFDKLEIGIASDITIRDKWSCGEIKKPETINYRTFKPEKGGLFCEKIFGPTKDWECCCGKYKKIKHKGIVCDRCGVEVTLSKVRRERMAHIELAVLIVHIWFFKTTPSRIGNVLGMTASDLERIIYYEEYVVIDPGKTDLNKKQLLNDAQYREVIEKWGKDSFVAKMGGEAIYDLLKSEDLQSLLKELKDRLRKTKSQQARMKLAKRLKIIEGFVSSSNHAEWMVLKSVPVVPPDLRPLVPLDGGRFATSDLNDLYRRVINRNNRLKAILRLKTPEVIVRNEKRMLQEAVDALFDNGRHGHPVMGAGNRPLKSLSEMLKGKNGRFRQNLLGKRVDYSGRSVIIVGPELKFNQCGLPKEMALELFEPFIIKRLKDQGSVYTIRSAKKMIQRGAPEVWDVLEEIIKGHPVLLNRAPTLHRLGIQAFEPVLIEGKAIRVHPLVCAAFNADFDGDQMAVHVPLSIEAQLEAKVLMMAPDNIFLPSSGKPVATPSKDMTLGIYYLMADPTYFPEDHGGKIKIFKDVTEVLRALYSGGFLDEHTDGRRDETGRGIHIHEKIKVRIDGQVIETTPGRVLFNRIVPKELGFQNYSMPSKRISELILQCYKKVGLEATVRFLDDLKDLGFIQATKAAISMGLKDVKIPEIKSEILKEAYDKVAIVKKQYDDGIITDGERHSKTISIWTEVSELLSDALYVEISKQTKSKHNPLFLMIDSGARGNKSQLKQLGALRGLMAKPNGAIIESPITSNFREGLTVLEYSISSHGARKGLADTALKTADSGYLTRRLVDVAQDVIITEKDCGTLNHIEITAIRQGSEELLPLKDRIYGRTVSEDIYQPGDKSKLLAENGDVITSAQAELIDDAGIESIKIRSTLTCESRRGVCAKCYGLNLANGRLIGLGEAVGIIAAQSIGEPGTQLTMRTFHLGGIAATSSTPEIVTNCDGILVYIDLRVVVGQDGNHLVLNKKGAIHVVRDEGRSLEEYKKLLSTKSIESLETYPVELGVKILVGDGEKVTAGQRIAEVELHNIPIICDKPGFVKYEDLVEGISTEKVANKNTGLVELIVKQHRGELHPQIAIYSDPGLTELVGTYAIPSGAIVSVEENQKVDPGMLLARLPRGAIKTKDITGGLPRVAELVEARKPEDAADIAKIDGVVDFKGIQKNKRILVVRDEITGMEEEHLIPLTKHLIVQRGDHVMKGQQLTDGLVVPHEILEICGVRELQKYLVNEVQEVYRLQGVDINDKHVEIIVRQMLQKVRITDPGDTTLLFGEEVNKKEFYEENKRTEEEGGKPAQAVPVLLGITKASLGTESFISAASFQDTTRVLTDAACSSKTDYLLGFKENVIMGHMIPGGTGFDTHKRIKQYLEKEQEELVFDFVSESECAC.

Zn(2+) contacts are provided by C72, C74, C87, and C90. D463, D465, and D467 together coordinate Mg(2+). 4 residues coordinate Zn(2+): C812, C887, C894, and C897.

Belongs to the RNA polymerase beta' chain family. In terms of assembly, the RNAP catalytic core consists of 2 alpha, 1 beta, 1 beta' and 1 omega subunit. When a sigma factor is associated with the core the holoenzyme is formed, which can initiate transcription. Mg(2+) is required as a cofactor. The cofactor is Zn(2+).

The catalysed reaction is RNA(n) + a ribonucleoside 5'-triphosphate = RNA(n+1) + diphosphate. In terms of biological role, DNA-dependent RNA polymerase catalyzes the transcription of DNA into RNA using the four ribonucleoside triphosphates as substrates. The sequence is that of DNA-directed RNA polymerase subunit beta' from Chlamydia abortus (strain DSM 27085 / S26/3) (Chlamydophila abortus).